Consider the following 393-residue polypeptide: Staphopain B (393 aa).

The first 36 residues, 1–36 (MNSSYKSRVFNIISIIMVSMLILSLGAFANNNKAKA), serve as a signal peptide directing secretion. The propeptide occupies 37–219 (DSHSKQLEIN…KVEENEAIQE (183 aa)). Active-site residues include cysteine 243, histidine 340, and asparagine 360.

It belongs to the peptidase C47 family. As to quaternary structure, in the cytoplasm, prematurely activated/folded SspB forms a stable non-covalent complex with SspC. In terms of processing, proteolytically cleaved by staphylococcal serine protease (SspA).

Its subcellular location is the secreted. Prematurely activated/folded staphopain B is inhibited by staphostatin B (SspC), which is probably required to protect staphylococcal cytoplasmic proteins from degradation by SspB. In terms of biological role, cysteine protease that plays an important role in the inhibition of host innate immune response. Degrades host elastin, fibrogen, fibronectin and kininogen. Blocks phagocytosis of opsonised S.aureus by neutrophils and monocytes by inducing their death in a proteolytic activity-dependent manner. Decreases surface expression of the 'don't eat me' signal CD31 on neutrophils. Cleaves host galectin-3/LGALS3, thereby inhibiting the neutrophil-activating ability of the lectin. The polypeptide is Staphopain B (sspB) (Staphylococcus aureus (strain Mu50 / ATCC 700699)).